Here is a 207-residue protein sequence, read N- to C-terminus: LexA repressor (207 aa).

Positions 28 to 48 form a DNA-binding region, H-T-H motif; that stretch reads RAEIAQKLGFKSANAAEEHLK. Catalysis depends on for autocatalytic cleavage activity residues Ser124 and Lys161.

The protein belongs to the peptidase S24 family. In terms of assembly, homodimer.

It carries out the reaction Hydrolysis of Ala-|-Gly bond in repressor LexA.. In terms of biological role, represses a number of genes involved in the response to DNA damage (SOS response), including recA and lexA. In the presence of single-stranded DNA, RecA interacts with LexA causing an autocatalytic cleavage which disrupts the DNA-binding part of LexA, leading to derepression of the SOS regulon and eventually DNA repair. The chain is LexA repressor from Aeromonas salmonicida (strain A449).